The following is a 137-amino-acid chain: Large ribosomal subunit protein uL16 (137 aa).

It belongs to the universal ribosomal protein uL16 family. In terms of assembly, part of the 50S ribosomal subunit.

Functionally, binds 23S rRNA and is also seen to make contacts with the A and possibly P site tRNAs. The protein is Large ribosomal subunit protein uL16 of Cereibacter sphaeroides (strain ATCC 17025 / ATH 2.4.3) (Rhodobacter sphaeroides).